Consider the following 472-residue polypeptide: FAD-dependent monooxygenase dpmaE (472 aa).

The first 24 residues, 1–24 (MSQRQFKVIIIGGSVTGLTLAHSL), serve as a signal peptide directing secretion. 3 residues coordinate FAD: glutamate 35, glycine 49, and arginine 108. Asparagine 128 and asparagine 179 each carry an N-linked (GlcNAc...) asparagine glycan. Residues aspartate 305 and alanine 318 each coordinate FAD. Residue asparagine 369 is glycosylated (N-linked (GlcNAc...) asparagine). Residues 440 to 460 (LLPLMFTLPLLYFGLSWIVGI) form a helical membrane-spanning segment.

It belongs to the paxM FAD-dependent monooxygenase family. Requires FAD as cofactor.

It is found in the membrane. It participates in secondary metabolite biosynthesis; terpenoid biosynthesis. In terms of biological role, FAD-dependent monooxygenase; part of the gene cluster that mediates the biosynthesis of the diterpenoid pyrones subglutinols A and B. The first step of the pathway is the synthesis of the alpha-pyrone moiety by the polyketide synthase dpmaA via condensation of one acetyl-CoA starter unit with 3 malonyl-CoA units and 2 methylations. The alpha-pyrone is then combined with geranylgeranyl pyrophosphate (GGPP) formed by the GGPP synthase dpmaD through the action of the prenyltransferase dpmaC to yield a linear alpha-pyrone diterpenoid. Subsequent steps in the diterpenoid pyrone biosynthetic pathway involve the decalin core formation, which is initiated by the epoxidation of the C10-C11 olefin by the FAD-dependent oxidoreductase dpmaE, and is followed by a cyclization cascade catalyzed by the terpene cyclase dpmaB. The dehydrogenase dpmaF is then involved in tetrahydrofuran (THF) ring formation at the C5 unit to complete the formation of subglutinols A and B. This chain is FAD-dependent monooxygenase dpmaE, found in Metarhizium anisopliae (Entomophthora anisopliae).